Reading from the N-terminus, the 961-residue chain is ATPase 7, plasma membrane-type (961 aa).

The Cytoplasmic portion of the chain corresponds to 1 to 64 (MTDIEALKAI…EKKESKILKF (64 aa)). A helical membrane pass occupies residues 65–84 (LGFMWNPLSWVMEAAALMAI). Over 85–96 (GLAHGGGKPADY) the chain is Extracellular. Residues 97–117 (HDFVGIVVLLLINSTISFVEE) form a helical membrane-spanning segment. Over 118–246 (NNAGNAAAAL…GHFQKVLTAI (129 aa)) the chain is Cytoplasmic. The helical transmembrane segment at 247-267 (GNFCICSIAVGMAIEIVVIYG) threads the bilayer. Over 268-276 (LQKRGYRVG) the chain is Extracellular. The helical transmembrane segment at 277 to 294 (IDNLLVLLIGGIPIAMPT) threads the bilayer. Residues 295–643 (VLSVTMAIGA…TSRAIFQRMK (349 aa)) lie on the Cytoplasmic side of the membrane. The active-site 4-aspartylphosphate intermediate is the aspartate 332. Positions 588 and 592 each coordinate Mg(2+). Residues 644–665 (NYTIYAVSITIRIVMGFMLLCV) traverse the membrane as a helical segment. Residues 666–670 (FWEFD) lie on the Extracellular side of the membrane. Residues 671–693 (FPPFMVLVIAILNDGTIMTISKD) form a helical membrane-spanning segment. The Cytoplasmic segment spans residues 694-709 (RVKPSPTPDCWKLKEI). A helical membrane pass occupies residues 710 to 730 (FATGVVLGAYLAIMTVVFFWA). At 731–764 (AYETNFFHNIFHVRNFNQHHFKMKDKKVAAHLNE) the chain is on the extracellular side. Residues 765 to 785 (QMASAVYLQVSTISQALIFVT) form a helical membrane-spanning segment. The Cytoplasmic portion of the chain corresponds to 786–797 (RSRSWSFVERPG). Residues 798-818 (FLLVIAFLIAQLVASVISAMA) form a helical membrane-spanning segment. Over 819 to 826 (NWPFAGIR) the chain is Extracellular. Residues 827-847 (SIGWGWTGVIWIFNIVTYMLL) form a helical membrane-spanning segment. Over 848-961 (DPIKFLVRYA…EDPNSNNYTI (114 aa)) the chain is Cytoplasmic. Position 894 is a phosphothreonine (threonine 894). Serine 910 and serine 942 each carry phosphoserine. The tract at residues 959–961 (YTI) is interaction with 14-3-3 proteins. Threonine 960 carries the post-translational modification Phosphothreonine.

This sequence belongs to the cation transport ATPase (P-type) (TC 3.A.3) family. Type IIIA subfamily. Binds to 14-3-3 proteins. The binding is induced by phosphorylation of Thr-960. Binding to 14-3-3 proteins activates the H(+)-ATPase. In terms of tissue distribution, expressed in guard cells, roots and leaves, and barely in mesophyll cells.

Its subcellular location is the membrane. The enzyme catalyses ATP + H2O + H(+)(in) = ADP + phosphate + 2 H(+)(out). Functionally, the plasma membrane H(+) ATPase of plants and fungi generates a proton gradient that drives the active transport of nutrients by H(+)-symport. The resulting external acidification and/or internal alkinization may mediate growth responses. This chain is ATPase 7, plasma membrane-type (AHA7), found in Arabidopsis thaliana (Mouse-ear cress).